A 283-amino-acid chain; its full sequence is N-terminal Xaa-Pro-Lys N-methyltransferase 2 (283 aa).

Residues Gly124, Arg129, Asp146, 174 to 175 (LQ), and Gln190 contribute to the S-adenosyl-L-methionine site.

Belongs to the methyltransferase superfamily. NTM1 family.

Its subcellular location is the nucleus. The enzyme catalyses N-terminal L-alanyl-L-prolyl-L-lysyl-[protein] + S-adenosyl-L-methionine = N-terminal N-methyl-L-alanyl-L-prolyl-L-lysyl-[protein] + S-adenosyl-L-homocysteine + H(+). It carries out the reaction N-terminal L-prolyl-L-prolyl-L-lysyl-[protein] + S-adenosyl-L-methionine = N-terminal N-methyl-L-prolyl-L-prolyl-L-lysyl-[protein] + S-adenosyl-L-homocysteine + H(+). The catalysed reaction is N-terminal L-seryl-L-prolyl-L-lysyl-[protein] + S-adenosyl-L-methionine = N-terminal N-methyl-L-seryl-L-prolyl-L-lysyl-[protein] + S-adenosyl-L-homocysteine + H(+). Its function is as follows. Alpha N-methyltransferase that methylates the N-terminus of target proteins containing the N-terminal motif [Ala/Pro/Ser]-Pro-Lys when the initiator Met is cleaved. Specifically catalyzes monomethylation of exposed alpha-amino group of Ala or Ser residue in the [Ala/Ser]-Pro-Lys motif and Pro in the Pro-Pro-Lys motif. Predominantly functions as a mono-methyltransferase but is also able to di-/tri-methylate the GPKRIA peptide and di-methylate the PPKRIA peptide (in vitro). May activate NTMT1 by priming its substrates for trimethylation. The sequence is that of N-terminal Xaa-Pro-Lys N-methyltransferase 2 (Ntmt2) from Mus musculus (Mouse).